Consider the following 179-residue polypeptide: UPF0227 protein VS_2073 (179 aa).

The protein belongs to the UPF0227 family.

This chain is UPF0227 protein VS_2073, found in Vibrio atlanticus (strain LGP32) (Vibrio splendidus (strain Mel32)).